The following is a 156-amino-acid chain: MNINATILGQAIAFVLFVMFCMKFVWPPIMAAIEKRQKEIADGLSSAERAKKDLDLAQANATDQMKKAKVEAQVIIEQANKQKAQILDDAKAEAEQERNRIVTQAQAEIDAERKRAREELRKQVAMLAIAGAEKIIERSVDEAANSDIVDKLVAEL.

The helical transmembrane segment at 11 to 31 threads the bilayer; the sequence is AIAFVLFVMFCMKFVWPPIMA.

This sequence belongs to the ATPase B chain family. As to quaternary structure, F-type ATPases have 2 components, F(1) - the catalytic core - and F(0) - the membrane proton channel. F(1) has five subunits: alpha(3), beta(3), gamma(1), delta(1), epsilon(1). F(0) has three main subunits: a(1), b(2) and c(10-14). The alpha and beta chains form an alternating ring which encloses part of the gamma chain. F(1) is attached to F(0) by a central stalk formed by the gamma and epsilon chains, while a peripheral stalk is formed by the delta and b chains.

The protein localises to the cell inner membrane. F(1)F(0) ATP synthase produces ATP from ADP in the presence of a proton or sodium gradient. F-type ATPases consist of two structural domains, F(1) containing the extramembraneous catalytic core and F(0) containing the membrane proton channel, linked together by a central stalk and a peripheral stalk. During catalysis, ATP synthesis in the catalytic domain of F(1) is coupled via a rotary mechanism of the central stalk subunits to proton translocation. In terms of biological role, component of the F(0) channel, it forms part of the peripheral stalk, linking F(1) to F(0). This chain is ATP synthase subunit b, found in Photorhabdus laumondii subsp. laumondii (strain DSM 15139 / CIP 105565 / TT01) (Photorhabdus luminescens subsp. laumondii).